We begin with the raw amino-acid sequence, 710 residues long: Prolyl endopeptidase (710 aa).

M1 bears the N-acetylmethionine mark. Residue K157 is modified to N6-acetyllysine. Catalysis depends on charge relay system residues S554, D641, and H680.

This sequence belongs to the peptidase S9A family. In terms of assembly, monomer. Post-translationally, the N-terminus is blocked.

It is found in the cytoplasm. The enzyme catalyses Hydrolysis of Pro-|-Xaa &gt;&gt; Ala-|-Xaa in oligopeptides.. Cleaves peptide bonds on the C-terminal side of prolyl residues within peptides that are up to approximately 30 amino acids long. In Homo sapiens (Human), this protein is Prolyl endopeptidase (PREP).